A 203-amino-acid chain; its full sequence is HTH-type transcriptional regulator CymR (203 aa).

In terms of domain architecture, HTH tetR-type spans 13 to 73 (METQGKLIAA…ATFEWLYEQI (61 aa)). A DNA-binding region (H-T-H motif) is located at residues 36 to 55 (RIADVPGAAGVSRGAQSHHF).

Involved in the repression of the cym and cmt operons which are responsible of the p-cymene degradation. The protein is HTH-type transcriptional regulator CymR of Pseudomonas putida (Arthrobacter siderocapsulatus).